Consider the following 164-residue polypeptide: Diphosphoinositol polyphosphate phosphohydrolase 3-beta (164 aa).

Substrate-binding positions include R9, 17 to 19 (KKR), and 38 to 40 (SSR). The Nudix hydrolase domain occupies 17-144 (KKRAACLCFR…VHAEYLQKLK (128 aa)). Mg(2+) contacts are provided by G49 and E65. Residues 50–71 (GGMEPEEEPGGAAVREVFEEAG) carry the Nudix box motif. Residue E68 is the Proton acceptor of the active site. E69 is a binding site for Mg(2+). Residues 89 to 91 (RKH), R115, and K133 each bind substrate. The disordered stretch occupies residues 144 to 164 (KLGGSPTNGNSVAPSPPEGDP).

It belongs to the Nudix hydrolase family. DIPP subfamily. Mg(2+) is required as a cofactor. It depends on Mn(2+) as a cofactor.

It localises to the cytoplasm. The enzyme catalyses diphospho-myo-inositol polyphosphate + H2O = myo-inositol polyphosphate + phosphate.. It catalyses the reaction P(1),P(6)-bis(5'-adenosyl) hexaphosphate + H2O = adenosine 5'-pentaphosphate + AMP + 2 H(+). It carries out the reaction P(1),P(5)-bis(5'-adenosyl) pentaphosphate + H2O = adenosine 5'-tetraphosphate + AMP + 2 H(+). Cleaves a beta-phosphate from the diphosphate groups in PP-InsP5 (diphosphoinositol pentakisphosphate), suggesting that it may play a role in signal transduction. Also able to catalyze the hydrolysis of dinucleoside oligophosphates, with Ap6A and Ap5A being the preferred substrates. The major reaction products are ADP and p4a from Ap6A and ADP and ATP from Ap5A. Also able to hydrolyze 5-phosphoribose 1-diphosphate. This chain is Diphosphoinositol polyphosphate phosphohydrolase 3-beta, found in Bos taurus (Bovine).